Consider the following 345-residue polypeptide: Proto-oncogene serine/threonine-protein kinase mos (345 aa).

The Protein kinase domain maps to 63-344 (VCLLQRLGAG…LDLRALQAEL (282 aa)). ATP is bound by residues 69–77 (LGAGGFGSV) and Lys90. Asp202 acts as the Proton acceptor in catalysis.

It belongs to the protein kinase superfamily. Ser/Thr protein kinase family. As to quaternary structure, interacts with MAP2K1/MEK1. Restricted to gonadal tissues.

The protein resides in the cytoplasm. The catalysed reaction is L-seryl-[protein] + ATP = O-phospho-L-seryl-[protein] + ADP + H(+). It carries out the reaction L-threonyl-[protein] + ATP = O-phospho-L-threonyl-[protein] + ADP + H(+). Its function is as follows. Serine/threonine kinase involved in the regulation of MAPK signaling. Is an activator of the ERK1/2 signaling cascade playing an essential role in the stimulation of oocyte maturation. The sequence is that of Proto-oncogene serine/threonine-protein kinase mos from Sus scrofa (Pig).